The following is a 181-amino-acid chain: MFKKFDEKENVSNCIQLKTSVIKGIKNQLIEQFPGIEPWLNQIMPKKDPVKIVRCHEHIEILTVNGELLFFRQREGPFYPTLRLLHKYPFILPHQQVDKGAIKFVLSGANIMCPGLTSPGAKLYPAAVDTIVAIMAEGKQHALCVGVMKMSAEDIEKVNKGIGIENIHYLNDGLWHMKTYK.

Phosphothreonine; by MAPK1 and MAPK3 is present on Thr-81. The PUA domain maps to 92–171 (LPHQQVDKGA…IGIENIHYLN (80 aa)). Position 118 is a phosphoserine; by CDK1 (Ser-118).

Belongs to the MCTS1 family. Interacts (via PUA domain) with DENR; the complex regulates translation reinitiation. In terms of processing, phosphorylation is critical for stabilization and promotion of cell proliferation. Ubiquitous. Over-expressed in T-cell lymphoid cell lines and in non-Hodgkin lymphoma cell lines as well as in a subset of primary large B-cell lymphomas.

The protein resides in the cytoplasm. Its function is as follows. Translation regulator forming a complex with DENR to promote translation reinitiation. Translation reinitiation is the process where the small ribosomal subunit remains attached to the mRNA following termination of translation of a regulatory upstream ORF (uORF), and resume scanning on the same mRNA molecule to initiate translation of a downstream ORF, usually the main ORF (mORF). The MCTS1/DENR complex is pivotal to two linked mechanisms essential for translation reinitiation. Firstly, the dissociation of deacylated tRNAs from post-termination 40S ribosomal complexes during ribosome recycling. Secondly, the recruitment in an EIF2-independent manner of aminoacylated initiator tRNA to P site of 40S ribosomes for a new round of translation. This regulatory mechanism governs the translation of more than 150 genes which translation reinitiation is MCTS1/DENR complex-dependent. Consequently, modulates various unrelated biological processes including cell cycle regulation and DNA damage signaling and repair. Notably, it positively regulates interferon gamma immunity to mycobacteria by enhancing the translation of JAK2. This is Malignant T-cell-amplified sequence 1 (MCTS1) from Homo sapiens (Human).